Here is a 454-residue protein sequence, read N- to C-terminus: tRNA modification GTPase MnmE (454 aa).

Residues Arg-23, Glu-80, and Lys-120 each contribute to the (6S)-5-formyl-5,6,7,8-tetrahydrofolate site. In terms of domain architecture, TrmE-type G spans 216–377; the sequence is GMKVVIAGRP…LRDHLKQSMG (162 aa). A K(+)-binding site is contributed by Asn-226. GTP-binding positions include 226–231, 245–251, 270–273, 335–338, and 358–360; these read NAGKSS, TDIAGTT, DTAG, NKAD, and SAR. Ser-230 serves as a coordination point for Mg(2+). K(+) is bound by residues Thr-245, Ile-247, and Thr-250. Thr-251 contributes to the Mg(2+) binding site. Position 454 (Lys-454) interacts with (6S)-5-formyl-5,6,7,8-tetrahydrofolate.

This sequence belongs to the TRAFAC class TrmE-Era-EngA-EngB-Septin-like GTPase superfamily. TrmE GTPase family. Homodimer. Heterotetramer of two MnmE and two MnmG subunits. It depends on K(+) as a cofactor.

It localises to the cytoplasm. Exhibits a very high intrinsic GTPase hydrolysis rate. Involved in the addition of a carboxymethylaminomethyl (cmnm) group at the wobble position (U34) of certain tRNAs, forming tRNA-cmnm(5)s(2)U34. The protein is tRNA modification GTPase MnmE of Yersinia pseudotuberculosis serotype IB (strain PB1/+).